We begin with the raw amino-acid sequence, 308 residues long: Aspartate carbamoyltransferase catalytic subunit (308 aa).

Positions 55 and 56 each coordinate carbamoyl phosphate. An L-aspartate-binding site is contributed by Lys84. Residues Arg105, His133, and Gln136 each contribute to the carbamoyl phosphate site. 2 residues coordinate L-aspartate: Arg167 and Arg228. Carbamoyl phosphate contacts are provided by Leu267 and Pro268.

This sequence belongs to the aspartate/ornithine carbamoyltransferase superfamily. ATCase family. Heterooligomer of catalytic and regulatory chains.

The enzyme catalyses carbamoyl phosphate + L-aspartate = N-carbamoyl-L-aspartate + phosphate + H(+). It functions in the pathway pyrimidine metabolism; UMP biosynthesis via de novo pathway; (S)-dihydroorotate from bicarbonate: step 2/3. Functionally, catalyzes the condensation of carbamoyl phosphate and aspartate to form carbamoyl aspartate and inorganic phosphate, the committed step in the de novo pyrimidine nucleotide biosynthesis pathway. This is Aspartate carbamoyltransferase catalytic subunit from Methanocella arvoryzae (strain DSM 22066 / NBRC 105507 / MRE50).